The primary structure comprises 290 residues: Nucleotide-binding protein LAR_0375 (290 aa).

ATP is bound at residue 13–20 (GMSGAGKT). 63 to 66 (DMRS) is a binding site for GTP.

It belongs to the RapZ-like family.

In terms of biological role, displays ATPase and GTPase activities. In Limosilactobacillus reuteri subsp. reuteri (strain JCM 1112) (Lactobacillus reuteri), this protein is Nucleotide-binding protein LAR_0375.